The chain runs to 506 residues: MTTQIPNQDSEILLTMTNVCKSFPGVKALDNANLTVRSHSVHALMGENGAGKSTLLKCLFGIYSKDEGDILFLGKPVNFKTSKEALENGISMVHQELNLVKQCTVMDNLWLGRYPLKAGFVDHGKMYRDTKAIFEELDIDIDPKEKVAKLSVSQMQMIEIAKAFSYNAKIVIMDEPTSSLSEKEVEHLFKIIAKLKQRGCGIIYISHKMDEIFKICDEITILRDGKWINTVAVKGTTMDQIVSMMVGRELTQRFPPKTNTPKETILTVENLTALNQPSIQDVSFELRKGEVLGIAGLVGAKRTDIVETIFGVRERKSGVIKLHDKEMKNRNAFEAINNGFALVTEERRSTGIYANLSIEFNSLISNMKSYISKLGLLSNTKMKSDTQWVIDSMNVKTPSHKTNIGSLSGGNQQKVVIGRWLLTQPEILMLDEPTRGIDIGAKYEIYQLIMELAKKDKGIIMISSEMPELLGVTDRILVMSNGKVAGIVNTAETSQEEILQLAAKYL.

2 ABC transporter domains span residues 14–249 (LTMT…VGRE) and 260–506 (TPKE…AKYL). An ATP-binding site is contributed by 46–53 (GENGAGKS).

Belongs to the ABC transporter superfamily. Galactose/methyl galactoside importer (TC 3.A.1.2.3) family. As to quaternary structure, the complex is composed of one ATP-binding protein (MglA), two transmembrane proteins (MglC) and a solute-binding protein (MglB).

The protein localises to the cell inner membrane. It catalyses the reaction D-galactose(out) + ATP + H2O = D-galactose(in) + ADP + phosphate + H(+). It carries out the reaction methyl beta-D-galactoside(out) + ATP + H2O = methyl beta-D-galactoside(in) + ADP + phosphate + H(+). Functionally, part of the ABC transporter complex MglABC involved in galactose/methyl galactoside import. Responsible for energy coupling to the transport system. The polypeptide is Galactose/methyl galactoside import ATP-binding protein MglA (Pasteurella multocida (strain Pm70)).